We begin with the raw amino-acid sequence, 870 residues long: DNA mismatch repair protein MutS (870 aa).

ATP is bound at residue 620 to 627 (GPNMAGKS).

This sequence belongs to the DNA mismatch repair MutS family.

Functionally, this protein is involved in the repair of mismatches in DNA. It is possible that it carries out the mismatch recognition step. This protein has a weak ATPase activity. This Acetivibrio thermocellus (strain ATCC 27405 / DSM 1237 / JCM 9322 / NBRC 103400 / NCIMB 10682 / NRRL B-4536 / VPI 7372) (Clostridium thermocellum) protein is DNA mismatch repair protein MutS.